The sequence spans 86 residues: MPKPDIHPTWYPDAKVICNGEVVMTTGSTQPEIHVDVWSGNHPFFTGTQKILDTEGRVDRFMKKYGMGQKKSGDKAKAEAKADAKS.

It belongs to the bacterial ribosomal protein bL31 family. Type A subfamily. In terms of assembly, part of the 50S ribosomal subunit.

Binds the 23S rRNA. This chain is Large ribosomal subunit protein bL31, found in Parasynechococcus marenigrum (strain WH8102).